Reading from the N-terminus, the 100-residue chain is Urease subunit gamma (100 aa).

The protein belongs to the urease gamma subunit family. As to quaternary structure, heterotrimer of UreA (gamma), UreB (beta) and UreC (alpha) subunits. Three heterotrimers associate to form the active enzyme.

The protein localises to the cytoplasm. The enzyme catalyses urea + 2 H2O + H(+) = hydrogencarbonate + 2 NH4(+). It participates in nitrogen metabolism; urea degradation; CO(2) and NH(3) from urea (urease route): step 1/1. This Mesorhizobium japonicum (strain LMG 29417 / CECT 9101 / MAFF 303099) (Mesorhizobium loti (strain MAFF 303099)) protein is Urease subunit gamma.